Here is a 152-residue protein sequence, read N- to C-terminus: Superoxide dismutase [Cu-Zn] (152 aa).

Residues histidine 45, histidine 47, and histidine 62 each coordinate Cu cation. The disordered stretch occupies residues 61–87 (PHFNPAGKEHGAPEDENRHAGDLGNAT). Zn(2+)-binding residues include histidine 62, histidine 70, histidine 79, and aspartate 82. Positions 67–81 (GKEHGAPEDENRHAG) are enriched in basic and acidic residues. Cu cation is bound at residue histidine 119.

Belongs to the Cu-Zn superoxide dismutase family. In terms of assembly, homodimer. Cu cation is required as a cofactor. It depends on Zn(2+) as a cofactor.

It is found in the cytoplasm. It catalyses the reaction 2 superoxide + 2 H(+) = H2O2 + O2. Destroys radicals which are normally produced within the cells and which are toxic to biological systems. This is Superoxide dismutase [Cu-Zn] from Zingiber officinale (Ginger).